The primary structure comprises 719 residues: ATP-dependent RNA helicase SUV3 homolog, mitochondrial (719 aa).

A mitochondrion-targeting transit peptide spans 1 to 18 (MRRASGVLRVLGGLTQRC). The interval 16-42 (QRCSTSSTPSSSRFPAMNSRRKRNSVR) is disordered. Residues 181–319 (EARSVTRKIF…PAAIDIVKKL (139 aa)) form the Helicase ATP-binding domain. Position 194–201 (194–201 (GPTNSGKT)) interacts with ATP. A Helicase C-terminal domain is found at 343–499 (KAIESYSNIE…PTYDQIETFS (157 aa)). The disordered stretch occupies residues 662 to 692 (SKAAGSSKSSEGKRENPSKSEREKPNKRSSI). Positions 671-687 (SEGKRENPSKSEREKPN) are enriched in basic and acidic residues. Residues 693–717 (LEALLKRADISEDDLEQLREELNKN) adopt a coiled-coil conformation.

Belongs to the helicase family. Mg(2+) serves as cofactor. Mn(2+) is required as a cofactor.

The protein resides in the mitochondrion matrix. It localises to the nucleus. The catalysed reaction is ATP + H2O = ADP + phosphate + H(+). Functionally, ATPase and DNA/RNA helicase able to unwind DNA/DNA, DNA/RNA and RNA/RNA duplexes in the 5'-3' direction. The chain is ATP-dependent RNA helicase SUV3 homolog, mitochondrial from Caenorhabditis elegans.